The chain runs to 331 residues: UDP-xylose and UDP-N-acetylglucosamine transporter (331 aa).

The next 10 helical transmembrane spans lie at 5-25, 30-50, 59-79, 92-112, 122-142, 153-173, 201-221, 238-260, 267-289, and 301-321; these read FAVT…ELLV, GCGN…GFIF, PQIP…VSVI, LHMI…IIIL, LSIV…AKQV, GVYA…ALLM, CLPL…AVLF, VMWF…VFIL, LTVT…LYFQ, and AVVF…PAAF.

Belongs to the nucleotide-sugar transporter family. SLC35B subfamily.

Its subcellular location is the golgi apparatus membrane. In terms of biological role, sugar transporter that specifically mediates the transport of UDP-xylose (UDP-Xyl) and UDP-N-acetylglucosamine (UDP-GlcNAc) from cytosol into Golgi. In Danio rerio (Zebrafish), this protein is UDP-xylose and UDP-N-acetylglucosamine transporter (slc35b4).